Consider the following 417-residue polypeptide: NADH-quinone oxidoreductase subunit D (417 aa).

The protein belongs to the complex I 49 kDa subunit family. As to quaternary structure, NDH-1 is composed of 14 different subunits. Subunits NuoB, C, D, E, F, and G constitute the peripheral sector of the complex.

The protein resides in the cell inner membrane. The enzyme catalyses a quinone + NADH + 5 H(+)(in) = a quinol + NAD(+) + 4 H(+)(out). Its function is as follows. NDH-1 shuttles electrons from NADH, via FMN and iron-sulfur (Fe-S) centers, to quinones in the respiratory chain. The immediate electron acceptor for the enzyme in this species is believed to be ubiquinone. Couples the redox reaction to proton translocation (for every two electrons transferred, four hydrogen ions are translocated across the cytoplasmic membrane), and thus conserves the redox energy in a proton gradient. This Paracidovorax citrulli (strain AAC00-1) (Acidovorax citrulli) protein is NADH-quinone oxidoreductase subunit D.